A 226-amino-acid chain; its full sequence is 7-cyano-7-deazaguanine synthase (226 aa).

7–17 is a binding site for ATP; that stretch reads LSGGMDSLVTT. Zn(2+) is bound by residues cysteine 187, cysteine 195, cysteine 198, and cysteine 201.

This sequence belongs to the QueC family. Zn(2+) is required as a cofactor.

The enzyme catalyses 7-carboxy-7-deazaguanine + NH4(+) + ATP = 7-cyano-7-deazaguanine + ADP + phosphate + H2O + H(+). It participates in purine metabolism; 7-cyano-7-deazaguanine biosynthesis. Catalyzes the ATP-dependent conversion of 7-carboxy-7-deazaguanine (CDG) to 7-cyano-7-deazaguanine (preQ(0)). This Chloroherpeton thalassium (strain ATCC 35110 / GB-78) protein is 7-cyano-7-deazaguanine synthase.